The sequence spans 542 residues: Chaperonin GroEL 1 (542 aa).

ATP contacts are provided by residues 30–33, K51, 87–91, G415, 480–482, and D496; these read TLGP, DGTTT, and NAA.

Belongs to the chaperonin (HSP60) family. In terms of assembly, forms a cylinder of 14 subunits composed of two heptameric rings stacked back-to-back. Interacts with the co-chaperonin GroES.

The protein resides in the cytoplasm. The catalysed reaction is ATP + H2O + a folded polypeptide = ADP + phosphate + an unfolded polypeptide.. In terms of biological role, together with its co-chaperonin GroES, plays an essential role in assisting protein folding. The GroEL-GroES system forms a nano-cage that allows encapsulation of the non-native substrate proteins and provides a physical environment optimized to promote and accelerate protein folding. The chain is Chaperonin GroEL 1 from Nitrobacter winogradskyi (strain ATCC 25391 / DSM 10237 / CIP 104748 / NCIMB 11846 / Nb-255).